The primary structure comprises 234 residues: Large ribosomal subunit protein uL1 (234 aa).

It belongs to the universal ribosomal protein uL1 family. In terms of assembly, part of the 50S ribosomal subunit.

In terms of biological role, binds directly to 23S rRNA. The L1 stalk is quite mobile in the ribosome, and is involved in E site tRNA release. Functionally, protein L1 is also a translational repressor protein, it controls the translation of the L11 operon by binding to its mRNA. The protein is Large ribosomal subunit protein uL1 of Syntrophobacter fumaroxidans (strain DSM 10017 / MPOB).